Consider the following 548-residue polypeptide: Sterol esterase TGL1 (548 aa).

An N-acetylmethionine; partial modification is found at Met1. Topologically, residues 1–13 (MYFPFLGRLSITD) are lumenal. Residues 14 to 34 (YIIVVLVYIESIISSVLKLIP) form a helical membrane-spanning segment. Topologically, residues 35–548 (QPMINLFEWL…TTALDALNKE (514 aa)) are cytoplasmic. The region spanning 107–402 (VVYLHHGLLM…NYEHLDLIWG (296 aa)) is the AB hydrolase-1 domain. The GXSXG motif lies at 199–203 (GFSQG). Residue Ser201 is the Nucleophile of the active site. Residue Lys246 forms a Glycyl lysine isopeptide (Lys-Gly) (interchain with G-Cter in ubiquitin) linkage. Residues Asp369 and His396 each act as charge relay system in the active site. Disordered stretches follow at residues 449–477 (TTHPTHGLSYRTHSADRSPLSVQADEADE) and 496–516 (IDEDNENEHQDDTEDQIHKEQ). Ser462 and Ser466 each carry phosphoserine. Residues 502–516 (NEHQDDTEDQIHKEQ) are compositionally biased toward basic and acidic residues. Residues Ser521 and Ser538 each carry the phosphoserine modification. The disordered stretch occupies residues 528–548 (KDLRQLDANSSTTALDALNKE). Thr539 carries the post-translational modification Phosphothreonine.

The protein belongs to the AB hydrolase superfamily. Post-translationally, not N-glycosylated.

The protein localises to the lipid droplet. The protein resides in the membrane. It carries out the reaction a sterol ester + H2O = a sterol + a fatty acid + H(+). Mediates the hydrolysis of steryl esters (SE). Preferentially hydrolyzes ergosteryl and zymosteryl esters. Required for mobilization of SEs from lipid particles/droplets, thereby playing a central role in lipid metabolism and sterol homeostasis. Sterol intermediates stored in SE and set free by SE hydrolases are recycled to the sterol biosynthetic pathway and converted to the final product, ergosterol, in the endoplasmic reticulum. Also has weak lipase activity toward triglycerides at neutral pH, however, the physiological relevance of this activity is unclear. The protein is Sterol esterase TGL1 (TGL1) of Saccharomyces cerevisiae (strain ATCC 204508 / S288c) (Baker's yeast).